We begin with the raw amino-acid sequence, 183 residues long: NADH-quinone oxidoreductase subunit A (183 aa).

A run of 3 helical transmembrane segments spans residues 11–31, 63–83, and 98–118; these read IIAF…VPLL, FYLV…LYAW, and VVIF…VGAL. Positions 159-183 are disordered; sequence TGQIPAQSSGRVKSKTTPALSSEKE.

The protein belongs to the complex I subunit 3 family. As to quaternary structure, NDH-1 is composed of 14 different subunits. Subunits NuoA, H, J, K, L, M, N constitute the membrane sector of the complex.

Its subcellular location is the cell inner membrane. It catalyses the reaction a quinone + NADH + 5 H(+)(in) = a quinol + NAD(+) + 4 H(+)(out). Its function is as follows. NDH-1 shuttles electrons from NADH, via FMN and iron-sulfur (Fe-S) centers, to quinones in the respiratory chain. The immediate electron acceptor for the enzyme in this species is believed to be ubiquinone. Couples the redox reaction to proton translocation (for every two electrons transferred, four hydrogen ions are translocated across the cytoplasmic membrane), and thus conserves the redox energy in a proton gradient. This Acinetobacter baumannii (strain AYE) protein is NADH-quinone oxidoreductase subunit A.